We begin with the raw amino-acid sequence, 345 residues long: MQAKINSFFKPSSSSSIAASVTTDTDDGLAVWENNRNAIVNTYQRRSAITERSEVLKGCIEKTLKKGSSSVPKNHKKKRNYTQFHLELGQSDFLLRHCAECGAKYAPGDELDEKNHQSFHKDYMYGLPFKGWQNEKAFTSPLFIKNRIVMVSENDSPAHRNKVQEVVKMMEVELGEDWILHQHCKVYLFISSQRISGCLVAEPIKEAFKLIASPDDERQLQKESSSSPSTSIQFGNIVLQREVSKRCRTSDDRLDNGVIVCEEEAKPAVCGIRAIWVSPSNRRKGIATWLLDTTRESFCNNGCMLEKSQLAFSQPSSIGRSFGSKYFGTCSFLLYKAQLIDTHFS.

A CCHH-type zinc finger spans residues 96–120 (RHCAECGAKYAPGDELDEKNHQSFH).

It belongs to the acetyltransferase family. ECO subfamily. In terms of processing, autoacetylated. In terms of tissue distribution, expressed in roots, stems, leaves, young seedlings and flower buds. Detected in the embryo, but not in the endosperm.

The protein resides in the nucleus. Its subcellular location is the cytoplasm. In terms of biological role, acetyltransferase required for the establishment of sister chromatid cohesion. Involved in preservation of genome integrity and meiosis. Required for DNA repair and for the regulation of chromosome segregation during mitotic cell division. Knock-down mutants are extremely dwarf. Regulator of sister chromatid cohesion in meiosis which negatively regulates cohesin association with chromatin, acting as an antagonist of WAPL1 and WAPL2. The protein is Protein CHROMOSOME TRANSMISSION FIDELITY 7 of Arabidopsis thaliana (Mouse-ear cress).